The sequence spans 291 residues: Kynurenine formamidase (291 aa).

The HGGXW motif lies at H33–W37. S107 serves as the catalytic Nucleophile. Active-site residues include D242 and H280.

It belongs to the kynurenine formamidase family. Homodimer.

The catalysed reaction is N-formyl-L-kynurenine + H2O = L-kynurenine + formate + H(+). The protein operates within amino-acid degradation; L-tryptophan degradation via kynurenine pathway; L-kynurenine from L-tryptophan: step 2/2. Its function is as follows. Catalyzes the hydrolysis of N-formyl-L-kynurenine to L-kynurenine, the second step in the kynurenine pathway of tryptophan degradation. Kynurenine may be further oxidized to nicotinic acid, NAD(H) and NADP(H). Required for elimination of toxic metabolites. This chain is Kynurenine formamidase, found in Debaryomyces hansenii (strain ATCC 36239 / CBS 767 / BCRC 21394 / JCM 1990 / NBRC 0083 / IGC 2968) (Yeast).